A 313-amino-acid polypeptide reads, in one-letter code: Ribosomal RNA small subunit methyltransferase H (313 aa).

S-adenosyl-L-methionine contacts are provided by residues 35–37 (GGH), Asp-55, Phe-80, Asp-102, and Gln-109.

The protein belongs to the methyltransferase superfamily. RsmH family.

Its subcellular location is the cytoplasm. The enzyme catalyses cytidine(1402) in 16S rRNA + S-adenosyl-L-methionine = N(4)-methylcytidine(1402) in 16S rRNA + S-adenosyl-L-homocysteine + H(+). In terms of biological role, specifically methylates the N4 position of cytidine in position 1402 (C1402) of 16S rRNA. The protein is Ribosomal RNA small subunit methyltransferase H of Shewanella oneidensis (strain ATCC 700550 / JCM 31522 / CIP 106686 / LMG 19005 / NCIMB 14063 / MR-1).